A 774-amino-acid polypeptide reads, in one-letter code: Armadillo-like helical domain-containing protein 4 (774 aa).

Residues 1 to 27 (MRGPIVLHICLAFCSLLLFSVATQCLA) form the signal peptide. Topologically, residues 28-714 (FPKIERRREI…KDKAGYMSGM (687 aa)) are extracellular. Residues 41–52 (HAEKGQSDKMNT) show a composition bias toward basic and acidic residues. Disordered regions lie at residues 41 to 63 (HAEKGQSDKMNTDDLENSSVTSK) and 97 to 135 (QPGQAGLMQTERPGVSTPTESGVPSAEEVFGSSQPERIS). Residue Asn-57 is glycosylated (N-linked (GlcNAc...) asparagine). N-linked (GlcNAc...) asparagine glycosylation occurs at Asn-189. Residues 221–233 (KTEKFEADTDHRT) are compositionally biased toward basic and acidic residues. 2 disordered regions span residues 221 to 275 (KTEK…QPLE) and 600 to 669 (ASYG…PGLE). The segment covering 258–275 (SQMTADNTQAAATKQPLE) has biased composition (polar residues). Over residues 607-651 (LESEEGQEDEDEEDEEDEDEEEEDEEEDEEDKDADSLDEGLDGDT) the composition is skewed to acidic residues. The chain crosses the membrane as a helical span at residues 715–735 (LVPVGVGIAGALFILGALYSI). Residues 736 to 774 (KVMNRRRRNGFKRHKRKQREFNSMQDRVMLLADSSEDEF) are Cytoplasmic-facing. Residues Ser-769 and Ser-770 each carry the phosphoserine modification.

Interacts with IL6ST; this interaction prevents IL6ST protein homodimerization and bridges ARMH4 with IL6R and STAT3 and therefore inhibits phosphorylation of STAT3 at 'Tyr-705'. Interacts (via cytoplasmic tail) with RICTOR; this interaction bridges ARMH4 to the mTORC2 complex and inhibits the mTORC2 kinase activity. In terms of tissue distribution, expressed in podocytes.

It localises to the membrane. In terms of biological role, may modulate immune response and may play a role in inflammation. Down-modulates STAT3 signaling throught direct interaction with IL6ST, resulting in the inhibition of phosphorylation of STAT3 at 'Tyr-705'. May negatively regulates AKT signaling by modulating the activity of mTORC2 complex through RICTOR interaction. In Homo sapiens (Human), this protein is Armadillo-like helical domain-containing protein 4.